The chain runs to 205 residues: N-(5'-phosphoribosyl)anthranilate isomerase (205 aa).

The protein belongs to the TrpF family.

The enzyme catalyses N-(5-phospho-beta-D-ribosyl)anthranilate = 1-(2-carboxyphenylamino)-1-deoxy-D-ribulose 5-phosphate. It participates in amino-acid biosynthesis; L-tryptophan biosynthesis; L-tryptophan from chorismate: step 3/5. This chain is N-(5'-phosphoribosyl)anthranilate isomerase, found in Acidiphilium cryptum (strain JF-5).